The sequence spans 405 residues: Probable tRNA sulfurtransferase (405 aa).

The THUMP domain maps to 60 to 165 (ETIDQRLKLV…QDAIYISNQL (106 aa)). ATP is bound by residues 183–184 (ML), 208–209 (HF), Arg-265, Gly-287, and Gln-296.

This sequence belongs to the ThiI family.

It is found in the cytoplasm. It carries out the reaction [ThiI sulfur-carrier protein]-S-sulfanyl-L-cysteine + a uridine in tRNA + 2 reduced [2Fe-2S]-[ferredoxin] + ATP + H(+) = [ThiI sulfur-carrier protein]-L-cysteine + a 4-thiouridine in tRNA + 2 oxidized [2Fe-2S]-[ferredoxin] + AMP + diphosphate. It catalyses the reaction [ThiS sulfur-carrier protein]-C-terminal Gly-Gly-AMP + S-sulfanyl-L-cysteinyl-[cysteine desulfurase] + AH2 = [ThiS sulfur-carrier protein]-C-terminal-Gly-aminoethanethioate + L-cysteinyl-[cysteine desulfurase] + A + AMP + 2 H(+). The protein operates within cofactor biosynthesis; thiamine diphosphate biosynthesis. In terms of biological role, catalyzes the ATP-dependent transfer of a sulfur to tRNA to produce 4-thiouridine in position 8 of tRNAs, which functions as a near-UV photosensor. Also catalyzes the transfer of sulfur to the sulfur carrier protein ThiS, forming ThiS-thiocarboxylate. This is a step in the synthesis of thiazole, in the thiamine biosynthesis pathway. The sulfur is donated as persulfide by IscS. This chain is Probable tRNA sulfurtransferase, found in Lactobacillus johnsonii (strain CNCM I-12250 / La1 / NCC 533).